A 492-amino-acid chain; its full sequence is MSPERSQEESPEGDTERTERKPMVKDAFKDISIYFTKEEWAEMGDWEKTRYRNVKMNYNALITVGLRATRPAFMCHRRQAIKLQVDDTEDSDEEWTPRQQVKPPWMAFRGEQSKHQKGMPKASFNNESSLRELSGTPNLLNTSDSEQAQKPVSPPGEASTSGQHSRLKLELRRKETEGKMYSLRERKGHAYKEISEPQDDDYLYCEMCQNFFIDSCAAHGPPTFVKDSAVDKGHPNRSALSLPPGLRIGPSGIPQAGLGVWNEASDLPLGLHFGPYEGRITEDEEAANSGYSWLITKGRNCYEYVDGKDKSSANWMRYVNCARDDEEQNLVAFQYHRQIFYRTCRVIRPGCELLVWSGDEYGQELGIRSSIEPAESLGQAVNCWSGMGMSMARNWASSGAASGRKSSWQGENQSQRSIHVPHAVWPFQVKNFSVNMWNAITPLRTSQDHLQENFSNQRIPAQGIRIRSGNILIHAAVMTKPKVKRSKKGPNS.

A disordered region spans residues 1–22 (MSPERSQEESPEGDTERTERKP). The 64-residue stretch at 23–86 (MVKDAFKDIS…RRQAIKLQVD (64 aa)) folds into the KRAB-related domain. The disordered stretch occupies residues 111 to 179 (EQSKHQKGMP…ELRRKETEGK (69 aa)). Over residues 135-150 (GTPNLLNTSDSEQAQK) the composition is skewed to polar residues. Basic and acidic residues predominate over residues 167-179 (LKLELRRKETEGK). The SET domain occupies 244–358 (PGLRIGPSGI…PGCELLVWSG (115 aa)).

It localises to the nucleus. It is found in the chromosome. It carries out the reaction N(6),N(6)-dimethyl-L-lysyl(4)-[histone H3] + S-adenosyl-L-methionine = N(6),N(6),N(6)-trimethyl-L-lysyl(4)-[histone H3] + S-adenosyl-L-homocysteine + H(+). In terms of biological role, histone methyltransferase that selectively methylates 'Lys-4' of dimethylated histone H3 (H3K4me2) to produce trimethylated 'Lys-4' histone H3 (H3K4me3). May play a role in epigenetic regulation of gene expression by defining an active chromatin state. This Homo sapiens (Human) protein is Histone-lysine N-methyltransferase PRDM7.